The sequence spans 80 residues: Small ribosomal subunit protein uS17 (80 aa).

It belongs to the universal ribosomal protein uS17 family. Part of the 30S ribosomal subunit.

Functionally, one of the primary rRNA binding proteins, it binds specifically to the 5'-end of 16S ribosomal RNA. The sequence is that of Small ribosomal subunit protein uS17 from Cereibacter sphaeroides (strain ATCC 17025 / ATH 2.4.3) (Rhodobacter sphaeroides).